The sequence spans 427 residues: Enolase (427 aa).

Gln-163 is a binding site for (2R)-2-phosphoglycerate. Glu-205 functions as the Proton donor in the catalytic mechanism. Mg(2+) is bound by residues Asp-242, Glu-285, and Asp-312. (2R)-2-phosphoglycerate-binding residues include Lys-337, Arg-366, Ser-367, and Lys-388. Lys-337 functions as the Proton acceptor in the catalytic mechanism.

This sequence belongs to the enolase family. Mg(2+) serves as cofactor.

Its subcellular location is the cytoplasm. It localises to the secreted. It is found in the cell surface. The catalysed reaction is (2R)-2-phosphoglycerate = phosphoenolpyruvate + H2O. The protein operates within carbohydrate degradation; glycolysis; pyruvate from D-glyceraldehyde 3-phosphate: step 4/5. In terms of biological role, catalyzes the reversible conversion of 2-phosphoglycerate (2-PG) into phosphoenolpyruvate (PEP). It is essential for the degradation of carbohydrates via glycolysis. The chain is Enolase from Albidiferax ferrireducens (strain ATCC BAA-621 / DSM 15236 / T118) (Rhodoferax ferrireducens).